Here is a 278-residue protein sequence, read N- to C-terminus: MATH domain and coiled-coil domain-containing protein At1g31400 (278 aa).

An MATH domain is found at 6-131 (EKRITWTIKN…SGQVKIVAEV (126 aa)). A coiled-coil region spans residues 232 to 267 (KLDWLEKKLKEVGKTRMQQLEQNLKDLKESLCWSSD).

The sequence is that of MATH domain and coiled-coil domain-containing protein At1g31400 from Arabidopsis thaliana (Mouse-ear cress).